The primary structure comprises 338 residues: Very-long-chain 3-oxoacyl-CoA reductase (338 aa).

A helical membrane pass occupies residues 20-40 (LSAFLLVMGSIGVGRVIYQTL). NADP(+)-binding residues include Val-66, Asn-95, Asp-120, Asn-147, Tyr-214, Lys-218, Val-247, and Ser-249. The active-site Proton donor is Tyr-214. Lys-218 (lowers pKa of active site Tyr) is an active-site residue.

Belongs to the short-chain dehydrogenases/reductases (SDR) family.

The protein localises to the endoplasmic reticulum membrane. It carries out the reaction a very-long-chain (3R)-3-hydroxyacyl-CoA + NADP(+) = a very-long-chain 3-oxoacyl-CoA + NADPH + H(+). The protein operates within lipid metabolism; fatty acid biosynthesis. Component of the microsomal membrane bound fatty acid elongation system, which produces the 26-carbon very long-chain fatty acids (VLCFA) from palmitate. Catalyzes the reduction of the 3-ketoacyl-CoA intermediate that is formed in each cycle of fatty acid elongation. VLCFAs serve as precursors for ceramide and sphingolipids. In Laccaria bicolor (strain S238N-H82 / ATCC MYA-4686) (Bicoloured deceiver), this protein is Very-long-chain 3-oxoacyl-CoA reductase.